Here is a 32-residue protein sequence, read N- to C-terminus: Dermatoxin-J1 (32 aa).

Gln-32 is modified (glutamine amide).

Expressed by the skin glands.

It is found in the secreted. Antimicrobial peptide. This Phasmahyla jandaia (Jandaia leaf frog) protein is Dermatoxin-J1.